The sequence spans 596 residues: Elongation factor 4 (596 aa).

Positions 2–184 constitute a tr-type G domain; it reads KNIRNFAIIA…SIVKYIPPPE (183 aa). GTP is bound by residues 14-19 and 131-134; these read DHGKST and NKID.

It belongs to the TRAFAC class translation factor GTPase superfamily. Classic translation factor GTPase family. LepA subfamily.

The protein resides in the cell inner membrane. The catalysed reaction is GTP + H2O = GDP + phosphate + H(+). Its function is as follows. Required for accurate and efficient protein synthesis under certain stress conditions. May act as a fidelity factor of the translation reaction, by catalyzing a one-codon backward translocation of tRNAs on improperly translocated ribosomes. Back-translocation proceeds from a post-translocation (POST) complex to a pre-translocation (PRE) complex, thus giving elongation factor G a second chance to translocate the tRNAs correctly. Binds to ribosomes in a GTP-dependent manner. This Neorickettsia sennetsu (strain ATCC VR-367 / Miyayama) (Ehrlichia sennetsu) protein is Elongation factor 4.